A 167-amino-acid polypeptide reads, in one-letter code: Endoribonuclease YbeY (167 aa).

Zn(2+)-binding residues include His131, His135, and His141.

The protein belongs to the endoribonuclease YbeY family. Requires Zn(2+) as cofactor.

The protein resides in the cytoplasm. In terms of biological role, single strand-specific metallo-endoribonuclease involved in late-stage 70S ribosome quality control and in maturation of the 3' terminus of the 16S rRNA. This is Endoribonuclease YbeY from Rickettsia conorii (strain ATCC VR-613 / Malish 7).